The following is a 354-amino-acid chain: Inactive ADP-ribosyltransferase ARH2 (354 aa).

Ser27 is subject to Phosphoserine.

It belongs to the ADP-ribosylglycohydrolase family.

The protein localises to the cytoplasm. It localises to the myofibril. It is found in the sarcomere. Functionally, required for myofibril assembly and outgrowth of the cardiac chambers in the developing heart. Appears to be catalytically inactive, showing no activity against O-acetyl-ADP-ribose. This is Inactive ADP-ribosyltransferase ARH2 (ADPRHL1) from Bos taurus (Bovine).